A 194-amino-acid polypeptide reads, in one-letter code: Holliday junction branch migration complex subunit RuvA (194 aa).

Residues M1–M63 form a domain I region. The interval S64–L142 is domain II. The flexible linker stretch occupies residues F143–D151. The interval D151–K194 is domain III.

The protein belongs to the RuvA family. Homotetramer. Forms an RuvA(8)-RuvB(12)-Holliday junction (HJ) complex. HJ DNA is sandwiched between 2 RuvA tetramers; dsDNA enters through RuvA and exits via RuvB. An RuvB hexamer assembles on each DNA strand where it exits the tetramer. Each RuvB hexamer is contacted by two RuvA subunits (via domain III) on 2 adjacent RuvB subunits; this complex drives branch migration. In the full resolvosome a probable DNA-RuvA(4)-RuvB(12)-RuvC(2) complex forms which resolves the HJ.

Its subcellular location is the cytoplasm. Functionally, the RuvA-RuvB-RuvC complex processes Holliday junction (HJ) DNA during genetic recombination and DNA repair, while the RuvA-RuvB complex plays an important role in the rescue of blocked DNA replication forks via replication fork reversal (RFR). RuvA specifically binds to HJ cruciform DNA, conferring on it an open structure. The RuvB hexamer acts as an ATP-dependent pump, pulling dsDNA into and through the RuvAB complex. HJ branch migration allows RuvC to scan DNA until it finds its consensus sequence, where it cleaves and resolves the cruciform DNA. This chain is Holliday junction branch migration complex subunit RuvA, found in Alkaliphilus oremlandii (strain OhILAs) (Clostridium oremlandii (strain OhILAs)).